The primary structure comprises 594 residues: MEFAAFADRAEELAAEPADIGTTRLVTDLLGAAGGTDENDDDLATVTRFLLGRVFPAHDTRTLDVGPALCREAIARAAGPNVTADDVEDRLAEEGEIGAVAAGFEFGGQRGLAAFGEGRDRLTVAAVDAELRRLAAAAGDGSESHKRDALFGLFNRCEPAEAKVIARLVLGEMRLGVGEGAVRDAIAEAFLAGNPEGDERDESDTDDDPILRAGDEAVVAVERALQVTNDYGRVAVLARDEGLNGLRAEGLAVGRPVQAMLAQAGTATDAVEAFGEVAVETKFDGARVQVHYVPESAAEGDDAAGGTELGPRIYSRNMDDVTDALPEVVEYVEARVSVPVILDGEVVAVDDDGDPLPFQEVLRRFRRKHDVDRMREEVGLRLHAFDCLHADGEDLLDEPFRARHDRLAEVLSDAAASVEFAGDPAAIEAAEAAALGAGHEGVMLKNPEAAYTPGNRGRDWLKRKPDVETLDAVVVGAEWGEGRRAELFGTFLLGVRAGDDELATIGKVATGLTDEELADLTERLEPHVVSEDGTEIEIRPEVVLEVGYEEIQTSPTYSSGYALRFPRFVGVRDDKSVDDADSLERVVRLAGDEK.

ATP is bound at residue glutamate 280. Lysine 282 acts as the N6-AMP-lysine intermediate in catalysis. ATP is bound by residues arginine 287, arginine 316, glutamate 345, phenylalanine 385, arginine 456, and lysine 462.

It belongs to the ATP-dependent DNA ligase family. The cofactor is Mg(2+).

The enzyme catalyses ATP + (deoxyribonucleotide)n-3'-hydroxyl + 5'-phospho-(deoxyribonucleotide)m = (deoxyribonucleotide)n+m + AMP + diphosphate.. Functionally, DNA ligase that seals nicks in double-stranded DNA during DNA replication, DNA recombination and DNA repair. This chain is DNA ligase, found in Halorubrum lacusprofundi (strain ATCC 49239 / DSM 5036 / JCM 8891 / ACAM 34).